The sequence spans 44 residues: Protein Tat (44 aa).

Residues 1 to 44 (APEDSQSHQVSLSKQPASQAGGDPTGPKESKKKVESETETDPVP) are disordered. Residues 7 to 18 (SHQVSLSKQPAS) are compositionally biased toward polar residues. Lys14 participates in a covalent cross-link: Glycyl lysine isopeptide (Lys-Gly) (interchain with G-Cter in ubiquitin). The Cell attachment site motif lies at 21-23 (GGD). Residues 26–36 (GPKESKKKVES) show a composition bias toward basic and acidic residues.

Belongs to the lentiviruses Tat family. In terms of assembly, interacts with host CCNT1. Associates with the P-TEFb complex composed at least of Tat, P-TEFb (CDK9 and CCNT1), TAR RNA, RNA Pol II. Recruits the HATs CREBBP, TAF1/TFIID, EP300, PCAF and GCN5L2. Interacts with host KAT5/Tip60; this interaction targets the latter to degradation. Interacts with the host deacetylase SIRT1. Interacts with host capping enzyme RNGTT; this interaction stimulates RNGTT. Binds to host KDR, and to the host integrins ITGAV/ITGB3 and ITGA5/ITGB1. Interacts with host KPNB1/importin beta-1 without previous binding to KPNA1/importin alpha-1. Interacts with EIF2AK2. Interacts with host nucleosome assembly protein NAP1L1; this interaction may be required for the transport of Tat within the nucleus, since the two proteins interact at the nuclear rim. Interacts with host C1QBP/SF2P32; this interaction involves lysine-acetylated Tat. Interacts with the host chemokine receptors CCR2, CCR3 and CXCR4. Interacts with host DPP4/CD26; this interaction may trigger an anti-proliferative effect. Interacts with host LDLR. Interacts with the host extracellular matrix metalloproteinase MMP1. Interacts with host PRMT6; this interaction mediates Tat's methylation. Interacts with, and is ubiquitinated by MDM2/Hdm2. Interacts with host PSMC3 and HTATIP2. Interacts with STAB1; this interaction may overcome SATB1-mediated repression of IL2 and IL2RA (interleukin) in T cells by binding to the same domain than HDAC1. Interacts (when acetylated) with human CDK13, thereby increasing HIV-1 mRNA splicing and promoting the production of the doubly spliced HIV-1 protein Nef. Acetylation by EP300, CREBBP, GCN5L2/GCN5 and PCAF regulates the transactivation activity of Tat. In terms of processing, phosphorylated by EIF2AK2 on serine and threonine residues adjacent to the basic region important for TAR RNA binding and function. Phosphorylation of Tat by EIF2AK2 is dependent on the prior activation of EIF2AK2 by dsRNA. Post-translationally, asymmetrical arginine methylation by host PRMT6 seems to diminish the transactivation capacity of Tat and affects the interaction with host CCNT1. Polyubiquitination by MDM2 does not target Tat to degradation, but activates its transactivation function and fosters interaction with CCNT1 and TAR RNA.

The protein localises to the host nucleus. It localises to the host nucleolus. It is found in the host cytoplasm. The protein resides in the secreted. Transcriptional activator that increases RNA Pol II processivity, thereby increasing the level of full-length viral transcripts. Recognizes a hairpin structure at the 5'-LTR of the nascent viral mRNAs referred to as the transactivation responsive RNA element (TAR) and recruits the cyclin T1-CDK9 complex (P-TEFb complex) that will in turn hyperphosphorylate the RNA polymerase II to allow efficient elongation. The CDK9 component of P-TEFb and other Tat-activated kinases hyperphosphorylate the C-terminus of RNA Pol II that becomes stabilized and much more processive. Other factors such as HTATSF1/Tat-SF1, SUPT5H/SPT5, and HTATIP2 are also important for Tat's function. Besides its effect on RNA Pol II processivity, Tat induces chromatin remodeling of proviral genes by recruiting the histone acetyltransferases (HATs) CREBBP, EP300 and PCAF to the chromatin. This also contributes to the increase in proviral transcription rate, especially when the provirus integrates in transcriptionally silent region of the host genome. To ensure maximal activation of the LTR, Tat mediates nuclear translocation of NF-kappa-B by interacting with host RELA. Through its interaction with host TBP, Tat may also modulate transcription initiation. Tat can reactivate a latently infected cell by penetrating in it and transactivating its LTR promoter. In the cytoplasm, Tat is thought to act as a translational activator of HIV-1 mRNAs. Its function is as follows. Extracellular circulating Tat can be endocytosed by surrounding uninfected cells via the binding to several surface receptors such as CD26, CXCR4, heparan sulfate proteoglycans (HSPG) or LDLR. Neurons are rarely infected, but they internalize Tat via their LDLR. Endosomal low pH allows Tat to cross the endosome membrane to enter the cytosol and eventually further translocate into the nucleus, thereby inducing severe cell dysfunctions ranging from cell activation to cell death. Through its interaction with nuclear HATs, Tat is potentially able to control the acetylation-dependent cellular gene expression. Tat seems to inhibit the HAT activity of KAT5/Tip60 and TAF1, and consequently modify the expression of specific cellular genes. Modulates the expression of many cellular genes involved in cell survival, proliferation or in coding for cytokines (such as IL10) or cytokine receptors. May be involved in the derepression of host interleukin IL2 expression. Mediates the activation of cyclin-dependent kinases and dysregulation of microtubule network. Tat plays a role in T-cell and neurons apoptosis. Tat induced neurotoxicity and apoptosis probably contribute to neuroAIDS. Host extracellular matrix metalloproteinase MMP1 cleaves Tat and decreases Tat's mediated neurotoxicity. Circulating Tat also acts as a chemokine-like and/or growth factor-like molecule that binds to specific receptors on the surface of the cells, affecting many cellular pathways. In the vascular system, Tat binds to ITGAV/ITGB3 and ITGA5/ITGB1 integrins dimers at the surface of endothelial cells and competes with bFGF for heparin-binding sites, leading to an excess of soluble bFGF. Binds to KDR/VEGFR-2. All these Tat-mediated effects enhance angiogenesis in Kaposi's sarcoma lesions. The sequence is that of Protein Tat from Human immunodeficiency virus type 1 group M subtype B (isolate BRVA) (HIV-1).